Reading from the N-terminus, the 290-residue chain is Phosphatidylglycerol--prolipoprotein diacylglyceryl transferase (290 aa).

Helical transmembrane passes span 21-41 (VALH…MWLA), 60-80 (LLYA…VLFY), 96-116 (WDGG…MVIF), 124-144 (FFQV…AGRL), 198-218 (SQLY…NLFI), 225-245 (GSVS…VEFF), and 260-280 (ISMG…MMIW). Arg-143 lines the a 1,2-diacyl-sn-glycero-3-phospho-(1'-sn-glycerol) pocket.

This sequence belongs to the Lgt family.

The protein resides in the cell inner membrane. The enzyme catalyses L-cysteinyl-[prolipoprotein] + a 1,2-diacyl-sn-glycero-3-phospho-(1'-sn-glycerol) = an S-1,2-diacyl-sn-glyceryl-L-cysteinyl-[prolipoprotein] + sn-glycerol 1-phosphate + H(+). Its pathway is protein modification; lipoprotein biosynthesis (diacylglyceryl transfer). Catalyzes the transfer of the diacylglyceryl group from phosphatidylglycerol to the sulfhydryl group of the N-terminal cysteine of a prolipoprotein, the first step in the formation of mature lipoproteins. The chain is Phosphatidylglycerol--prolipoprotein diacylglyceryl transferase from Enterobacter sp. (strain 638).